Consider the following 111-residue polypeptide: uncharacterized protein (111 aa).

The protein to B.subtilis XkdW.

This is an uncharacterized protein from Bacillus subtilis (strain 168).